We begin with the raw amino-acid sequence, 603 residues long: Aquaporin-2 (603 aa).

Residues 40–70 traverse the membrane as a helical segment; it reads SLKKYKYNLFFEFIGSFLFVFFISIYMLNSN. 2 stretches are compositionally biased toward basic and acidic residues: residues 135 to 149 and 156 to 190; these read NNKSKREVERDDDKI and EFEKDNEKKKNYDNINEKEISTTSDGKIKDMEDPK. A disordered region spans residues 135–200; sequence NNKSKREVER…NISNKNENYD (66 aa). Over residues 191–200 the composition is skewed to polar residues; it reads NISNKNENYD. 5 helical membrane passes run 282–299, 321–346, 360–393, 442–471, and 509–542; these read HAIYSFVGCFIYVIFILL, FALSTLYITFQYFGGIVASIICAHLY, IIKTFLCEFISTFLITLLLLSLYNYKKKFMEENK, NKYIKYIMNHIFYLLFIFFSLLFFVFVTNT, and ITKIFQLLIFYIQSLPLWIGPYFGSAFAATFLSL.

Belongs to the MIP/aquaporin (TC 1.A.8) family.

The protein resides in the endomembrane system. It carries out the reaction H2O(in) = H2O(out). It catalyses the reaction glycerol(in) = glycerol(out). In terms of biological role, required for sporozoite development in the mosquito vector. This chain is Aquaporin-2, found in Plasmodium falciparum (isolate NF54).